The primary structure comprises 373 residues: Putative ribosome biogenesis protein C8F11.04 (373 aa).

A disordered region spans residues 265-373 (RKVVTKETAS…VKAGKNKVKH (109 aa)). Basic and acidic residues predominate over residues 292–320 (KVEVAKESKDSKQQNVSDKKQVTVKEVPK). Residues 347–359 (KVSQSSLKANGTT) show a composition bias toward polar residues. Residues 362–373 (KKVKAGKNKVKH) show a composition bias toward basic residues.

This sequence belongs to the universal ribosomal protein uL1 family. Highly divergent. Component of the 90S pre-ribosomes.

It is found in the nucleus. The protein resides in the nucleolus. Involved in rRNA-processing and ribosome biosynthesis. The chain is Putative ribosome biogenesis protein C8F11.04 from Schizosaccharomyces pombe (strain 972 / ATCC 24843) (Fission yeast).